Consider the following 329-residue polypeptide: Prostaglandin reductase 1 (329 aa).

Thr-18 is modified (phosphothreonine). The residue at position 20 (Ser-20) is a Phosphoserine. NADP(+) is bound by residues 152-155, Lys-178, Tyr-193, Asn-217, 239-245, 270-272, and Asn-321; these read GAVG, CGAISVY, and FIV. The residue at position 178 (Lys-178) is an N6-(2-hydroxyisobutyryl)lysine; alternate. Lys-178 is subject to N6-acetyllysine; alternate.

Belongs to the NADP-dependent oxidoreductase L4BD family. As to quaternary structure, monomer or homodimer. In terms of tissue distribution, detected in small intestine, kidney, liver, spleen and stomach (at protein level). Detected in small intestine, kidney and liver.

It localises to the cytoplasm. The catalysed reaction is 13,14-dihydro-15-oxo-prostaglandin E1 + NADP(+) = 15-oxoprostaglandin E1 + NADPH + H(+). The enzyme catalyses 13,14-dihydro-15-oxo-prostaglandin E2 + NAD(+) = 15-oxoprostaglandin E2 + NADH + H(+). It carries out the reaction 13,14-dihydro-15-oxo-prostaglandin F1alpha + NADP(+) = 15-oxoprostaglandin F1alpha + NADPH + H(+). It catalyses the reaction 13,14-dihydro-15-oxo-PGF2alpha + NADP(+) = 15-oxoprostaglandin F2alpha + NADPH + H(+). The catalysed reaction is leukotriene B4 + NADP(+) = 12-oxo-leukotriene B4 + NADPH + H(+). The enzyme catalyses 20-hydroxy-leukotriene B4 + NADP(+) = 12-oxo-20-hydroxy-leukotriene B4 + NADPH + H(+). It carries out the reaction 6-trans-leukotriene B4 + NADP(+) = 12-oxo-(5S)-hydroxy-(6E,8E,10E,14Z)-eicosatetraenoate + NADPH + H(+). It catalyses the reaction (5S,12S)-dihydroxy-(6E,10E,12E,14Z)-eicosatetraenoate + NADP(+) = 12-oxo-(5S)-hydroxy-(6E,8E,10E,14Z)-eicosatetraenoate + NADPH + H(+). The catalysed reaction is an n-alkanal + NADP(+) = an alk-2-enal + NADPH + H(+). The enzyme catalyses hexanal + NADP(+) = (E)-hex-2-enal + NADPH + H(+). It carries out the reaction octanal + NADP(+) = (2E)-octenal + NADPH + H(+). It catalyses the reaction decanal + NADP(+) = (2E)-decenal + NADPH + H(+). The catalysed reaction is dodecanal + NADP(+) = (2E)-dodecenal + NADPH + H(+). The enzyme catalyses 4-hydroxynonanal + NADP(+) = (E)-4-hydroxynon-2-enal + NADPH + H(+). It carries out the reaction pentan-2-one + NADP(+) = (E)-pent-3-en-2-one + NADPH + H(+). It catalyses the reaction nonan-2-one + NADP(+) = (3E)-nonen-2-one + NADPH + H(+). Its function is as follows. NAD(P)H-dependent oxidoreductase involved in metabolic inactivation of pro- and anti-inflammatory eicosanoids: prostaglandins (PG), leukotrienes (LT) and lipoxins (LX). Catalyzes with high efficiency the reduction of the 13,14 double bond of 15-oxoPGs, including 15-oxo-PGE1, 15-oxo-PGE2, 15-oxo-PGF1-alpha and 15-oxo-PGF2-alpha. Catalyzes with lower efficiency the oxidation of the hydroxyl group at C12 of LTB4 and its derivatives, converting them into biologically less active 12-oxo-LTB4 metabolites. Reduces 15-oxo-LXA4 to 13,14 dihydro-15-oxo-LXA4, enhancing neutrophil recruitment at the inflammatory site. Plays a role in metabolic detoxification of alkenals and ketones. Reduces alpha,beta-unsaturated alkenals and ketones, particularly those with medium-chain length, showing highest affinity toward (2E)-decenal and (3E)-3-nonen-2-one. May inactivate 4-hydroxy-2-nonenal, a cytotoxic lipid constituent of oxidized low-density lipoprotein particles. In Cavia porcellus (Guinea pig), this protein is Prostaglandin reductase 1 (Ptgr1).